A 411-amino-acid polypeptide reads, in one-letter code: Solute carrier RCH1 (411 aa).

Residues 1 to 17 (MSLETFRESKAYKWTSK) lie on the Cytoplasmic side of the membrane. The helical transmembrane segment at 18–38 (VISFLIGQWFFIFLGVFIALA) threads the bilayer. Over 39-52 (HSYPEFAKQGGTIR) the chain is Extracellular. The chain crosses the membrane as a helical span at residues 53–73 (AEYSIGYGAVAVIFLISGLSM). At 74 to 89 (STKQLLVNVANWRAHF) the chain is on the cytoplasmic side. The helical transmembrane segment at 90–110 (TVLSMSFLVTSAIIYGIASGI) threads the bilayer. Residues 111–120 (KASHNGQIDD) lie on the Extracellular side of the membrane. A helical transmembrane segment spans residues 121–141 (WLLIGLIVTHACPTTVSSNVV). Over 142–150 (MTKQAHGND) the chain is Cytoplasmic. The chain crosses the membrane as a helical span at residues 151–171 (ILTLCEVFIGNVLGAFITPAL). The Extracellular portion of the chain corresponds to 172–204 (LQMYMRGTWEIGNPSHQTQGDSTVQELYAHTMK). The helical transmembrane segment at 205-225 (QLGLSVFVPLFVGQVVQNIFP) threads the bilayer. The Cytoplasmic segment spans residues 226–242 (KQTKWCLTTFKLNKVGS). A helical membrane pass occupies residues 243–263 (FMLLLIMFQSFSTAFAQHAFT). At 264-269 (SVSHAS) the chain is on the extracellular side. A helical membrane pass occupies residues 270-290 (IIFLVFFNIGIYLFFTVLTFF). Topologically, residues 291-329 (YSRPFWILRVFKEEPNESSSKLYRYSYAFFRPFYYNRKD) are cytoplasmic. The helical transmembrane segment at 330–350 (TVAVMLCGPAKTAALGVSLVS) threads the bilayer. Residues 351–361 (SQYGSHNPKLG) lie on the Extracellular side of the membrane. Residues 362–382 (IILVPLVLYQAEQVMTANVLV) traverse the membrane as a helical segment. Topologically, residues 383-411 (SFMRKWIHAEDKVPEDEETSVGSDNDPKK) are cytoplasmic.

This sequence belongs to the bile acid:sodium symporter (BASS) (TC 2.A.28) family.

It localises to the cell membrane. It is found in the bud neck. Solute carrier protein that negatively regulates the cytosolic homeostasis in response to high levels of extracellular calcium. This chain is Solute carrier RCH1, found in Candida albicans (strain SC5314 / ATCC MYA-2876) (Yeast).